Consider the following 316-residue polypeptide: Short-chain dehydrogenase/reductase family 16C member 6 (316 aa).

An NAD(+)-binding site is contributed by 40 to 64; it reads LITGAASGLGRLLAIKFASLGAILV. Substrate is bound at residue serine 173. Tyrosine 186 serves as the catalytic Proton acceptor.

Belongs to the short-chain dehydrogenases/reductases (SDR) family.

The polypeptide is Short-chain dehydrogenase/reductase family 16C member 6 (SDR16C6) (Bos taurus (Bovine)).